The sequence spans 233 residues: ATP synthase subunit a 2 (233 aa).

Helical transmembrane passes span 15 to 35 (FVVI…LVIG), 78 to 98 (YLAF…LTVV), 107 to 127 (SLST…IYGI), 169 to 189 (IMSG…FVPV), and 194 to 214 (LGLV…LVYI).

It belongs to the ATPase A chain family. As to quaternary structure, F-type ATPases have 2 components, CF(1) - the catalytic core - and CF(0) - the membrane proton channel. CF(1) has five subunits: alpha(3), beta(3), gamma(1), delta(1), epsilon(1). CF(0) has four main subunits: a, b, b' and c.

The protein resides in the cellular thylakoid membrane. Functionally, key component of the proton channel; it plays a direct role in the translocation of protons across the membrane. This chain is ATP synthase subunit a 2, found in Picosynechococcus sp. (strain ATCC 27264 / PCC 7002 / PR-6) (Agmenellum quadruplicatum).